The following is a 225-amino-acid chain: PKHD-type hydroxylase Smlt1146 (225 aa).

The Fe2OG dioxygenase domain maps to 78 to 177 (KYLPPRFNRY…RVASFFWVQS (100 aa)). H96, D98, and H158 together coordinate Fe cation. R168 lines the 2-oxoglutarate pocket.

The cofactor is Fe(2+). L-ascorbate serves as cofactor.

This Stenotrophomonas maltophilia (strain K279a) protein is PKHD-type hydroxylase Smlt1146.